The following is a 510-amino-acid chain: NAD(P)H-quinone oxidoreductase subunit 2 A, chloroplastic (510 aa).

13 helical membrane-spanning segments follow: residues 24–44 (LLLF…GLIL), 59–79 (WFYF…LFRW), 99–119 (IFQF…VEYI), 124–144 (MAIT…MFLC), 149–169 (LITI…LSGY), 183–203 (YLLM…WLYG), 229–249 (ISIA…PAPF), 295–315 (WHLL…LIAI), 323–343 (MLAY…IVGD), 347–367 (GYAS…GTFA), 395–415 (ALSS…AGFF), 418–438 (LHLF…IGLL), and 484–504 (MIVC…IIAI).

It belongs to the complex I subunit 2 family. NDH is composed of at least 16 different subunits, 5 of which are encoded in the nucleus.

Its subcellular location is the plastid. The protein resides in the chloroplast thylakoid membrane. The enzyme catalyses a plastoquinone + NADH + (n+1) H(+)(in) = a plastoquinol + NAD(+) + n H(+)(out). It catalyses the reaction a plastoquinone + NADPH + (n+1) H(+)(in) = a plastoquinol + NADP(+) + n H(+)(out). Functionally, NDH shuttles electrons from NAD(P)H:plastoquinone, via FMN and iron-sulfur (Fe-S) centers, to quinones in the photosynthetic chain and possibly in a chloroplast respiratory chain. The immediate electron acceptor for the enzyme in this species is believed to be plastoquinone. Couples the redox reaction to proton translocation, and thus conserves the redox energy in a proton gradient. The chain is NAD(P)H-quinone oxidoreductase subunit 2 A, chloroplastic from Amborella trichopoda.